The chain runs to 386 residues: Acetate kinase (386 aa).

A Mg(2+)-binding site is contributed by Asn7. Lys14 is a binding site for ATP. Arg78 serves as a coordination point for substrate. Asp135 acts as the Proton donor/acceptor in catalysis. Residues 195 to 199 (HLGNG), 268 to 270 (DMR), and 316 to 320 (GIGEN) each bind ATP. Glu370 is a binding site for Mg(2+).

It belongs to the acetokinase family. As to quaternary structure, homodimer. Mg(2+) is required as a cofactor. The cofactor is Mn(2+).

Its subcellular location is the cytoplasm. The enzyme catalyses acetate + ATP = acetyl phosphate + ADP. The protein operates within metabolic intermediate biosynthesis; acetyl-CoA biosynthesis; acetyl-CoA from acetate: step 1/2. In terms of biological role, catalyzes the formation of acetyl phosphate from acetate and ATP. Can also catalyze the reverse reaction. This is Acetate kinase from Pseudarthrobacter chlorophenolicus (strain ATCC 700700 / DSM 12829 / CIP 107037 / JCM 12360 / KCTC 9906 / NCIMB 13794 / A6) (Arthrobacter chlorophenolicus).